Reading from the N-terminus, the 523-residue chain is Metalloendopeptidase OMA1, mitochondrial (523 aa).

A mitochondrion-targeting transit peptide spans 1–45 (MSFIYGLQSAARNCFFFRFNLLTNWRKCNTQAVTSRDFHQVKINH). The propeptide occupies 46-143 (IVNKSLGLGV…RSFHTSPRCQ (98 aa)). Over 144–195 (AAPAPLLLMILKPAQKLLAIIVGRGIRKWWQALPPNKKELFKESLRKNKWKL) the chain is Mitochondrial matrix. The interval 148 to 167 (PLLLMILKPAQKLLAIIVGR) is cardiolipin-binding. The tract at residues 165 to 195 (VGRGIRKWWQALPPNKKELFKESLRKNKWKL) is stress-sensor region. A helical transmembrane segment spans residues 196 to 216 (FLGLSSFGLLFVVFYFTHLEV). Zn(2+) is bound at residue histidine 327. Glutamate 328 is an active-site residue. Positions 331 and 392 each coordinate Zn(2+). A disulfide bridge links cysteine 407 with cysteine 465.

Belongs to the peptidase M48 family. Homooligomer. It depends on Zn(2+) as a cofactor. Post-translationally, autocatalytically cleaved in response to mitochondrial depolarization both at the N-terminus and C-terminus to generate the short active form (S-OMA1). Autocatalytic processing at the C-terminus takes place at residues 447-456. The S-OMA1 form is unstable. OMA1 pre-processing by AFG3L2 may participate in maturation before OMA1 autocatalytic cleavage. Degraded by YMEL1 in response to membrane depolarization. Protein turnover is regulated by prohibitin (PHB and PHB2), which promotes degradation of OMA1 in a cardiolipin-binding manner. May form a redox-dependent disulfide bond. Exists in a semi-oxidized state and is activated by prolonged hypoxia.

The protein localises to the mitochondrion inner membrane. Protease activity is activated upon autocatalytic cleavage in response to mitochondrial depolarization. In terms of biological role, metalloprotease that is part of the quality control system in the inner membrane of mitochondria. Activated in response to various mitochondrial stress, leading to the proteolytic cleavage of target proteins, such as OPA1, UQCC3 and DELE1. Involved in the fusion of the mitochondrial inner membranes by mediating cleavage of OPA1 at S1 position, generating the soluble OPA1 (S-OPA1), which cooperates with the membrane form (L-OPA1) to coordinate the fusion of mitochondrial inner membranes. Following stress conditions that induce loss of mitochondrial membrane potential, mediates cleavage of OPA1, leading to excess production of soluble OPA1 (S-OPA1) and negative regulation of mitochondrial fusion. Involved in mitochondrial safeguard in response to transient mitochondrial membrane depolarization (flickering) by catalyzing cleavage of OPA1, leading to excess production of S-OPA1, preventing mitochondrial hyperfusion. Also acts as a regulator of apoptosis: upon BAK and BAX aggregation, mediates cleavage of OPA1, leading to the remodeling of mitochondrial cristae and allowing the release of cytochrome c from mitochondrial cristae. In depolarized mitochondria, may also act as a backup protease for PINK1 by mediating PINK1 cleavage and promoting its subsequent degradation by the proteasome. May also cleave UQCC3 in response to mitochondrial depolarization. Also acts as an activator of the integrated stress response (ISR): in response to mitochondrial stress, mediates cleavage of DELE1 to generate the processed form of DELE1 (S-DELE1), which translocates to the cytosol and activates EIF2AK1/HRI to trigger the ISR. Its role in mitochondrial quality control is essential for regulating lipid metabolism as well as to maintain body temperature and energy expenditure under cold-stress conditions. Binds cardiolipin, possibly regulating its protein turnover. Required for the stability of the respiratory supercomplexes. The chain is Metalloendopeptidase OMA1, mitochondrial from Bos taurus (Bovine).